The primary structure comprises 76 residues: Large ribosomal subunit protein eL20 (76 aa).

It belongs to the eukaryotic ribosomal protein eL20 family. Part of the 50S ribosomal subunit. Binds 23S rRNA.

This Methanocaldococcus jannaschii (strain ATCC 43067 / DSM 2661 / JAL-1 / JCM 10045 / NBRC 100440) (Methanococcus jannaschii) protein is Large ribosomal subunit protein eL20.